The chain runs to 657 residues: Probable potassium transport system protein Kup (657 aa).

The interval 1–25 (MGSGPADEEHTVDTEPGVSPPRRTV) is disordered. 12 helical membrane-spanning segments follow: residues 35–55 (VVVGALGVVFGDIGTSPIYTI), 77–97 (VVSLIFWSVMLIVTATYVLLV), 127–147 (TAVLAGLGIFGAALFFGDSMI), 165–185 (PGLEEWIVPITAVIIVALFSV), 196–216 (LFGPVMIVWFVSIGACGVSGI), 234–254 (FFFGHFGIAFFALAAVVLAVT), 275–295 (WLVLVLPACVLSYLGQGALLL), 315–335 (WPMVLLATAATVIASQAVITG), 365–385 (IYVPWINWVLMVSVLTLVFAF), 394–414 (AFGMAVTGTITITTLLFFYIV), 422–442 (LWLVVCGAGCLLAVDLLFLAA), and 447–467 (LVHGAWLPLLIALTAFTVMTT).

This sequence belongs to the HAK/KUP transporter (TC 2.A.72) family.

It localises to the cell membrane. It carries out the reaction K(+)(in) + H(+)(in) = K(+)(out) + H(+)(out). Transport of potassium into the cell. Likely operates as a K(+):H(+) symporter. This is Probable potassium transport system protein Kup from Rhodococcus jostii (strain RHA1).